The sequence spans 304 residues: Putative dihydroorotate dehydrogenase A (fumarate) (304 aa).

FMN contacts are provided by residues Ser22 and 46–47; that span reads KG. Residues Lys46 and 70-74 contribute to the substrate site; that span reads NSVGL. FMN-binding residues include Asn100 and Asn128. Asn128 provides a ligand contact to substrate. Cys131 acts as the Nucleophile in catalysis. Positions 166 and 192 each coordinate FMN. 193–194 serves as a coordination point for substrate; that stretch reads NT. FMN is bound by residues Gly218, 244–245, and 266–267; these read GG and GT.

This sequence belongs to the dihydroorotate dehydrogenase family. Type 1 subfamily. Homodimer. Requires FMN as cofactor.

It localises to the cytoplasm. It carries out the reaction (S)-dihydroorotate + fumarate = orotate + succinate. It participates in pyrimidine metabolism; UMP biosynthesis via de novo pathway. Its function is as follows. Catalyzes the conversion of dihydroorotate to orotate with fumarate as the electron acceptor. In Solibacter usitatus (strain Ellin6076), this protein is Putative dihydroorotate dehydrogenase A (fumarate) (pyrD).